The chain runs to 367 residues: ADP-ribosylhydrolase ARH3 (367 aa).

Mg(2+)-binding residues include glutamate 41, threonine 79, aspartate 80, and aspartate 81. Aspartate 80 contributes to the substrate binding site. Residues 149 to 155 (KGSYGNG), histidine 185, leucine 238, and isoleucine 274 contribute to the substrate site. 2 residues coordinate Mg(2+): aspartate 317 and threonine 320.

Belongs to the ADP-ribosylglycohydrolase family. As to quaternary structure, monomer. Requires Mg(2+) as cofactor.

Its subcellular location is the nucleus. It localises to the cytoplasm. It is found in the chromosome. The protein resides in the mitochondrion matrix. It catalyses the reaction [(1''-&gt;2')-ADP-alpha-D-ribose](n) + H2O = [(1''-&gt;2')-ADP-alpha-D-ribose](n-1) + ADP-D-ribose. The catalysed reaction is 1''-O-acetyl-ADP-alpha-D-ribose + H2O = ADP-D-ribose + acetate + H(+). The enzyme catalyses O-(ADP-D-ribosyl)-L-seryl-[protein] + H2O = ADP-D-ribose + L-seryl-[protein]. It carries out the reaction alpha-NAD(+) + H2O = ADP-D-ribose + nicotinamide + H(+). Its activity is regulated as follows. The protein undergoes a dramatic conformational switch from closed to open states upon substrate-binding, which enables specific substrate recognition for the 1''-O-linkage. The glutamate flap (Glu-41) blocks substrate entrance to Mg(2+) in the unliganded closed state. In presence of substrate, Glu-41 is ejected from the active site: this closed-to-open transition significantly widens the substrate-binding channel and precisely positions the scissile 1''-O-linkage for cleavage while securing tightly 2'- and 3'-hydroxyls of ADP-ribose. Its function is as follows. ADP-ribosylhydrolase that preferentially hydrolyzes the scissile alpha-O-linkage attached to the anomeric C1'' position of ADP-ribose and acts on different substrates, such as proteins ADP-ribosylated on serine and threonine, free poly(ADP-ribose) and O-acetyl-ADP-D-ribose. Specifically acts as a serine mono-ADP-ribosylhydrolase by mediating the removal of mono-ADP-ribose attached to serine residues on proteins, thereby playing a key role in DNA damage response. Serine ADP-ribosylation of proteins constitutes the primary form of ADP-ribosylation of proteins in response to DNA damage. Does not hydrolyze ADP-ribosyl-arginine, -cysteine, -diphthamide, or -asparagine bonds. Also able to degrade protein free poly(ADP-ribose), which is synthesized in response to DNA damage: free poly(ADP-ribose) acts as a potent cell death signal and its degradation by ADPRHL2 protects cells from poly(ADP-ribose)-dependent cell death, a process named parthanatos. Also hydrolyzes free poly(ADP-ribose) in mitochondria. Specifically digests O-acetyl-ADP-D-ribose, a product of deacetylation reactions catalyzed by sirtuins. Specifically degrades 1''-O-acetyl-ADP-D-ribose isomer, rather than 2''-O-acetyl-ADP-D-ribose or 3''-O-acetyl-ADP-D-ribose isomers. This Gallus gallus (Chicken) protein is ADP-ribosylhydrolase ARH3 (ADPRS).